Reading from the N-terminus, the 291-residue chain is Nucleotide-binding protein lmo2474 (291 aa).

An ATP-binding site is contributed by 13-20 (GMSGAGKT). Position 63 to 66 (63 to 66 (DLRG)) interacts with GTP.

This sequence belongs to the RapZ-like family.

Functionally, displays ATPase and GTPase activities. This is Nucleotide-binding protein lmo2474 from Listeria monocytogenes serovar 1/2a (strain ATCC BAA-679 / EGD-e).